We begin with the raw amino-acid sequence, 401 residues long: 8-amino-7-oxononanoate synthase (401 aa).

Arg24 is a binding site for substrate. Position 111–112 (111–112 (GF)) interacts with pyridoxal 5'-phosphate. Position 137 (His137) interacts with substrate. Pyridoxal 5'-phosphate is bound by residues Ser183, His211, and Thr240. An N6-(pyridoxal phosphate)lysine modification is found at Lys243. Thr357 lines the substrate pocket.

It belongs to the class-II pyridoxal-phosphate-dependent aminotransferase family. BioF subfamily. As to quaternary structure, homodimer. The cofactor is pyridoxal 5'-phosphate.

The catalysed reaction is 6-carboxyhexanoyl-[ACP] + L-alanine + H(+) = (8S)-8-amino-7-oxononanoate + holo-[ACP] + CO2. The protein operates within cofactor biosynthesis; biotin biosynthesis. Its function is as follows. Catalyzes the decarboxylative condensation of pimeloyl-[acyl-carrier protein] and L-alanine to produce 8-amino-7-oxononanoate (AON), [acyl-carrier protein], and carbon dioxide. The polypeptide is 8-amino-7-oxononanoate synthase (Xylella fastidiosa (strain 9a5c)).